The following is a 244-amino-acid chain: Protein HRI1 (244 aa).

A Phosphoserine modification is found at Ser-143.

It belongs to the HRI1 family. Interacts with HRR25. May interact with SEC72.

Its subcellular location is the cytoplasm. It is found in the nucleus. In terms of biological role, unknown. Non essential. The polypeptide is Protein HRI1 (HRI1) (Saccharomyces cerevisiae (strain ATCC 204508 / S288c) (Baker's yeast)).